The sequence spans 505 residues: L-arabinose isomerase (505 aa).

4 residues coordinate Mn(2+): Glu308, Glu335, His352, and His453.

Belongs to the arabinose isomerase family. Mn(2+) serves as cofactor.

The enzyme catalyses beta-L-arabinopyranose = L-ribulose. It functions in the pathway carbohydrate degradation; L-arabinose degradation via L-ribulose; D-xylulose 5-phosphate from L-arabinose (bacterial route): step 1/3. Functionally, catalyzes the conversion of L-arabinose to L-ribulose. The protein is L-arabinose isomerase of Bifidobacterium animalis subsp. lactis (strain AD011).